The primary structure comprises 44 residues: DNA-directed RNA polymerase subunit Rpo12 (44 aa).

Positions 8, 22, and 25 each coordinate Zn(2+).

The protein belongs to the archaeal Rpo12/eukaryotic RPC10 RNA polymerase subunit family. In terms of assembly, part of the RNA polymerase complex. Zn(2+) is required as a cofactor.

It localises to the cytoplasm. The catalysed reaction is RNA(n) + a ribonucleoside 5'-triphosphate = RNA(n+1) + diphosphate. Functionally, DNA-dependent RNA polymerase (RNAP) catalyzes the transcription of DNA into RNA using the four ribonucleoside triphosphates as substrates. This Natronomonas pharaonis (strain ATCC 35678 / DSM 2160 / CIP 103997 / JCM 8858 / NBRC 14720 / NCIMB 2260 / Gabara) (Halobacterium pharaonis) protein is DNA-directed RNA polymerase subunit Rpo12.